The primary structure comprises 679 residues: Retrovirus-related Env polyprotein from Fv-4 locus (679 aa).

Positions 268-321 are disordered; sequence IGPNPVLSDQRPPSRPVPARPPPPSNSTPTGDPLTPPTGDPLTPTKPPQAGTGD. Composition is skewed to pro residues over residues 280-293 and 301-314; these read PSRPVPARPPPPSN and LTPPTGDPLTPTKP.

This Mus musculus (Mouse) protein is Retrovirus-related Env polyprotein from Fv-4 locus (Fv4).